We begin with the raw amino-acid sequence, 321 residues long: Glucokinase (321 aa).

8–13 contributes to the ATP binding site; the sequence is GDVGGT.

This sequence belongs to the bacterial glucokinase family.

The protein resides in the cytoplasm. The enzyme catalyses D-glucose + ATP = D-glucose 6-phosphate + ADP + H(+). The sequence is that of Glucokinase from Escherichia coli (strain SMS-3-5 / SECEC).